The sequence spans 527 residues: FAD-dependent monooxygenase CTB5 (527 aa).

The region spanning S78 to Q255 is the FAD-binding PCMH-type domain.

Belongs to the oxygen-dependent FAD-linked oxidoreductase family.

Its pathway is mycotoxin biosynthesis. FAD-dependent monooxygenase; part of the gene cluster that mediates the biosynthesis of cercosporin, a light-activated, non-host-selective toxin. The perylenequinone chromophore of cercosporin absorbs light energy to attain an electronically-activated triplet state and produces active oxygen species such as the hydroxyl radical, superoxide, hydrogen peroxide or singlet oxygen upon reaction with oxygen molecules. These reactive oxygen species cause damage to various cellular components including lipids, proteins and nucleic acids. The first step of cercosporin biosynthesis is performed by the polyketide synthase CTB1 which catalyzes the formation of nor-toralactone. The starter unit acyltransferase (SAT) domain of CTB1 initiates polyketide extension by the selective utilization of acetyl-CoA, which is elongated to the heptaketide in the beta-ketoacyl synthase (KS) domain by successive condensations with six malonyl units introduced by the malonyl acyltransferase (MAT) domain. The product template (PT) domain catalyzes C4-C9 and C2-C11 aldol cyclizations and dehydrations to a trihydroxynaphthalene, which is thought to be delivered to the thioesterase (TE) domain for product release. The bifunctional enzyme CTB3 then methylates nor-toralactone to toralactone before conducting an unusual oxidative aromatic ring opening. The O-methyltransferase CTB2 further methylates the nascent OH-6 of the CBT3 product, blocking further oxidation at this site before the reductase CTB6 reduces the 2-oxopropyl ketone at position C7, giving naphthalene. The FAD-dependent monooxygenase CTB5 in concert with the multicopper oxidase CTB12 are responsible for homodimerization of naphthalene with CTB7 installing the dioxepine moiety, finally producing cercosporin. The fasciclin domain-containing protein CTB11 might act with CTB5 and CTB12 whereas the roles of CTB9 and CTB10 have still to be elucidated. The polypeptide is FAD-dependent monooxygenase CTB5 (Cercospora beticola (Sugarbeet leaf spot fungus)).